The sequence spans 207 residues: Ras-related protein Rab7 (207 aa).

GTP is bound by residues 15–22 (GDSGVGKT), 63–67 (DTAGQ), and 125–128 (NKID). S-geranylgeranyl cysteine attachment occurs at residues Cys-205 and Cys-207. At Cys-207 the chain carries Cysteine methyl ester.

It belongs to the small GTPase superfamily. Rab family.

It localises to the cell membrane. Its function is as follows. Protein transport. Probably involved in vesicular traffic. The polypeptide is Ras-related protein Rab7 (Prunus armeniaca (Apricot)).